The sequence spans 242 residues: Orotidine 5'-phosphate decarboxylase (242 aa).

Residues aspartate 22, lysine 44, 71–80 (DLKYHDIPNT), threonine 130, arginine 190, glutamine 199, glycine 219, and arginine 220 each bind substrate. Catalysis depends on lysine 73, which acts as the Proton donor.

This sequence belongs to the OMP decarboxylase family. Type 1 subfamily. Homodimer.

It carries out the reaction orotidine 5'-phosphate + H(+) = UMP + CO2. It functions in the pathway pyrimidine metabolism; UMP biosynthesis via de novo pathway; UMP from orotate: step 2/2. Catalyzes the decarboxylation of orotidine 5'-monophosphate (OMP) to uridine 5'-monophosphate (UMP). This chain is Orotidine 5'-phosphate decarboxylase, found in Laribacter hongkongensis (strain HLHK9).